An 88-amino-acid polypeptide reads, in one-letter code: Putative membrane protein insertion efficiency factor (88 aa).

It belongs to the UPF0161 family.

The protein localises to the cell membrane. Could be involved in insertion of integral membrane proteins into the membrane. The polypeptide is Putative membrane protein insertion efficiency factor (yrcB) (Lactococcus lactis subsp. lactis (strain IL1403) (Streptococcus lactis)).